The chain runs to 640 residues: Replication protein A 70 kDa DNA-binding subunit A (640 aa).

The OB DNA-binding region spans 211-293; that stretch reads AIKARVTAKG…NHLKNEWEIF (83 aa). The C4-type zinc-finger motif lies at 503–529; the sequence is CPLMIGDKQCNKKVTRSGTNRWLCDRC.

It belongs to the replication factor A protein 1 family. In terms of assembly, heterotrimer of RPA1, RPA2 and RPA3 (canonical replication protein A complex). Interacts with RPA2A. In terms of tissue distribution, expressed in roots, leaves, stalks and flower buds.

It is found in the nucleus. Component of the replication protein A complex (RPA) required for DNA recombination, repair and replication. The activity of RPA is mediated by single-stranded DNA binding and protein interactions. Plays an essential role at later stages of meiotic recombination events required for the formation of class I crossovers. Is essential for normal progression through meiosis in pollen mother cells. Is involved in repair of double-strand DNA breaks (DSBs) induced by genotoxic stresses, but does not seem to be required for the repair of meiotic DSBs. The polypeptide is Replication protein A 70 kDa DNA-binding subunit A (RPA1A) (Arabidopsis thaliana (Mouse-ear cress)).